A 229-amino-acid polypeptide reads, in one-letter code: Heptaprenylglyceryl phosphate synthase (229 aa).

Lys-12 contributes to the sn-glycerol 1-phosphate binding site. Mg(2+)-binding residues include Asp-14 and Thr-40. Sn-glycerol 1-phosphate contacts are provided by residues 159–164, Gly-189, and 209–210; these read YIEYSG and GN.

It belongs to the GGGP/HepGP synthase family. Group I subfamily. In terms of assembly, homodimer. It depends on Mg(2+) as a cofactor.

It carries out the reaction sn-glycerol 1-phosphate + all-trans-heptaprenyl diphosphate = 3-heptaprenyl-sn-glycero-1-phosphate + diphosphate. The protein operates within membrane lipid metabolism; glycerophospholipid metabolism. Functionally, prenyltransferase that catalyzes in vivo the transfer of the heptaprenyl moiety of heptaprenyl pyrophosphate (HepPP; 35 carbon atoms) to the C3 hydroxyl of sn-glycerol-1-phosphate (G1P), producing heptaprenylglyceryl phosphate (HepGP). This reaction is an ether-bond-formation step in the biosynthesis of archaea-type G1P-based membrane lipids found in Bacillales. This is Heptaprenylglyceryl phosphate synthase from Staphylococcus carnosus (strain TM300).